The chain runs to 791 residues: Probable potassium transporter 11 (791 aa).

Over M1–R49 the chain is Cytoplasmic. A helical membrane pass occupies residues L50–F70. Residues Y71–A87 lie on the Extracellular side of the membrane. Residues L88–L108 traverse the membrane as a helical segment. Residues R109 to L175 lie on the Cytoplasmic side of the membrane. The chain crosses the membrane as a helical span at residues L176 to I196. Residues S197–D215 are Extracellular-facing. N211 is a glycosylation site (N-linked (GlcNAc...) asparagine). The chain crosses the membrane as a helical span at residues V216–T236. Over D237–K238 the chain is Cytoplasmic. A helical transmembrane segment spans residues V239 to A259. Topologically, residues L260–S289 are extracellular. A helical membrane pass occupies residues W290 to L310. The Cytoplasmic portion of the chain corresponds to C311 to V315. The chain crosses the membrane as a helical span at residues F316–A338. Topologically, residues A339–S359 are extracellular. Residues I360–I380 traverse the membrane as a helical segment. The Cytoplasmic segment spans residues S381–Q411. A helical transmembrane segment spans residues I412–F432. The Extracellular segment spans residues K433–T444. N-linked (GlcNAc...) asparagine glycosylation is present at N434. Residues A445–W465 traverse the membrane as a helical segment. At K466–H468 the chain is on the cytoplasmic side. The helical transmembrane segment at W469–A489 threads the bilayer. Residues C490–Q496 lie on the Extracellular side of the membrane. A helical membrane pass occupies residues G497–F517. Over C518 to I791 the chain is Cytoplasmic.

The protein belongs to the HAK/KUP transporter (TC 2.A.72.3) family.

It localises to the membrane. High-affinity potassium transporter. The sequence is that of Probable potassium transporter 11 from Oryza sativa subsp. japonica (Rice).